The following is a 183-amino-acid chain: Nucleosome assembly protein 1-like 5 (183 aa).

The tract at residues 1–71 (MADSENQGPA…APKPKNDFIE (71 aa)) is disordered. 2 stretches are compositionally biased toward low complexity: residues 7-21 (QGPA…AAEA) and 28-49 (AEGG…SAAG). The stretch at 81 to 107 (VLALKKLQKRCDKIEAKFDKEFQALEK) forms a coiled coil. Residues 135–161 (EGEEEEEEEYEDDEEEGEEEEEEEEAA) show a composition bias toward acidic residues. The segment at 135–183 (EGEEEEEEEYEDDEEEGEEEEEEEEAAAEAAAGAKHDDAHAEMPDDAKK) is disordered. Over residues 168–183 (AKHDDAHAEMPDDAKK) the composition is skewed to basic and acidic residues.

Belongs to the nucleosome assembly protein (NAP) family.

Its subcellular location is the nucleus. The protein is Nucleosome assembly protein 1-like 5 (NAP1L5) of Pongo abelii (Sumatran orangutan).